Consider the following 619-residue polypeptide: Chaperone protein HscA homolog (619 aa).

The protein belongs to the heat shock protein 70 family.

Its function is as follows. Chaperone involved in the maturation of iron-sulfur cluster-containing proteins. Has a low intrinsic ATPase activity which is markedly stimulated by HscB. This is Chaperone protein HscA homolog from Chromobacterium violaceum (strain ATCC 12472 / DSM 30191 / JCM 1249 / CCUG 213 / NBRC 12614 / NCIMB 9131 / NCTC 9757 / MK).